The primary structure comprises 502 residues: Glycerol kinase (502 aa).

Threonine 14 is a binding site for ADP. Threonine 14, threonine 15, and serine 16 together coordinate ATP. Sn-glycerol 3-phosphate is bound at residue threonine 14. Arginine 18 contacts ADP. Sn-glycerol 3-phosphate-binding residues include arginine 84, glutamate 85, tyrosine 136, and aspartate 246. 5 residues coordinate glycerol: arginine 84, glutamate 85, tyrosine 136, aspartate 246, and glutamine 247. ADP is bound by residues threonine 268 and glycine 311. Positions 268, 311, 315, and 412 each coordinate ATP. 2 residues coordinate ADP: glycine 412 and asparagine 416.

Belongs to the FGGY kinase family. In terms of assembly, homotetramer and homodimer (in equilibrium). Heterodimer with EIIA-Glc. Binds 1 zinc ion per glycerol kinase EIIA-Glc dimer. The zinc ion is important for dimerization.

It catalyses the reaction glycerol + ATP = sn-glycerol 3-phosphate + ADP + H(+). Its pathway is polyol metabolism; glycerol degradation via glycerol kinase pathway; sn-glycerol 3-phosphate from glycerol: step 1/1. With respect to regulation, activity of this regulatory enzyme is affected by several metabolites. Allosterically and non-competitively inhibited by fructose 1,6-bisphosphate (FBP) and unphosphorylated phosphocarrier protein EIIA-Glc (III-Glc), an integral component of the bacterial phosphotransferase (PTS) system. Key enzyme in the regulation of glycerol uptake and metabolism. Catalyzes the phosphorylation of glycerol to yield sn-glycerol 3-phosphate. In Salmonella arizonae (strain ATCC BAA-731 / CDC346-86 / RSK2980), this protein is Glycerol kinase.